A 214-amino-acid polypeptide reads, in one-letter code: Germin-like protein 9-3 (214 aa).

An N-terminal signal peptide occupies residues 1 to 23 (MASSILLLVVLAVVSAPVALVMA). N-linked (GlcNAc...) asparagine glycans are attached at residues N42, N60, and N69. The region spanning 59–202 (MNMSMPMPNA…SFKTDVPTIQ (144 aa)) is the Cupin type-1 domain. Mn(2+) contacts are provided by H104, H106, E111, and H150.

Belongs to the germin family. As to quaternary structure, oligomer (believed to be a pentamer but probably hexamer).

Its subcellular location is the secreted. The protein resides in the extracellular space. It localises to the apoplast. In terms of biological role, may play a role in plant defense. Probably has no oxalate oxidase activity even if the active site is conserved. This Oryza sativa subsp. japonica (Rice) protein is Germin-like protein 9-3.